Reading from the N-terminus, the 204-residue chain is Elongation factor Ts (204 aa).

Positions 80-83 (TDFV) are involved in Mg(2+) ion dislocation from EF-Tu.

The protein belongs to the EF-Ts family.

The protein localises to the cytoplasm. Associates with the EF-Tu.GDP complex and induces the exchange of GDP to GTP. It remains bound to the aminoacyl-tRNA.EF-Tu.GTP complex up to the GTP hydrolysis stage on the ribosome. The polypeptide is Elongation factor Ts (Caldicellulosiruptor saccharolyticus (strain ATCC 43494 / DSM 8903 / Tp8T 6331)).